A 95-amino-acid chain; its full sequence is Co-chaperonin GroES (95 aa).

It belongs to the GroES chaperonin family. In terms of assembly, heptamer of 7 subunits arranged in a ring. Interacts with the chaperonin GroEL.

The protein localises to the cytoplasm. Its function is as follows. Together with the chaperonin GroEL, plays an essential role in assisting protein folding. The GroEL-GroES system forms a nano-cage that allows encapsulation of the non-native substrate proteins and provides a physical environment optimized to promote and accelerate protein folding. GroES binds to the apical surface of the GroEL ring, thereby capping the opening of the GroEL channel. The protein is Co-chaperonin GroES of Deinococcus radiodurans (strain ATCC 13939 / DSM 20539 / JCM 16871 / CCUG 27074 / LMG 4051 / NBRC 15346 / NCIMB 9279 / VKM B-1422 / R1).